Consider the following 334-residue polypeptide: NAC domain-containing protein 66 (334 aa).

The region spanning 11–175 (VPPGFRFHPT…GWVVCRVFKK (165 aa)) is the NAC domain. The DNA-binding element occupies 111-181 (IGMRKTLVFY…VFKKNNLCKN (71 aa)).

Mostly expressed in anthers. Also present in pollen, base of siliques and inflorescence stems.

It is found in the nucleus. In terms of biological role, transcription activator of genes involved in biosynthesis of secondary walls. Together with NST1, required for the secondary cell wall thickening of the anther endocethium, which is necessary for anther dehiscence. May also regulate the secondary cell wall lignification of other tissues such as tracheary elements. The chain is NAC domain-containing protein 66 (NAC066) from Arabidopsis thaliana (Mouse-ear cress).